The sequence spans 159 residues: Large ribosomal subunit protein uL15 (159 aa).

Basic and acidic residues predominate over residues 1–11 (MKLNELRDNEG). Residues 1-40 (MKLNELRDNEGARYQSKRLGRGIGSGKGKTSGKGVKGQTS) are disordered. The segment covering 21–35 (RGIGSGKGKTSGKGV) has biased composition (gly residues).

This sequence belongs to the universal ribosomal protein uL15 family. In terms of assembly, part of the 50S ribosomal subunit.

In terms of biological role, binds to the 23S rRNA. This Paramagnetospirillum magneticum (strain ATCC 700264 / AMB-1) (Magnetospirillum magneticum) protein is Large ribosomal subunit protein uL15.